The following is a 434-amino-acid chain: 4-hydroxyphenylpyruvate dioxygenase (434 aa).

Residues 1 to 21 (MPPTPTTPAATGAAAAVTPEH) form a disordered region. Over residues 7–19 (TPAATGAAAAVTP) the composition is skewed to low complexity. VOC domains follow at residues 41-192 (SFHH…FLPG) and 208-368 (RFDH…IFTK). His-211, His-293, and Glu-379 together coordinate Fe cation.

It belongs to the 4HPPD family. Requires Fe cation as cofactor.

The protein resides in the cytoplasm. The enzyme catalyses 3-(4-hydroxyphenyl)pyruvate + O2 = homogentisate + CO2. Its pathway is amino-acid degradation; L-phenylalanine degradation; acetoacetate and fumarate from L-phenylalanine: step 3/6. The protein operates within cofactor biosynthesis; prenylquinone biosynthesis. This chain is 4-hydroxyphenylpyruvate dioxygenase, found in Hordeum vulgare (Barley).